The chain runs to 30 residues: Small toxic protein BsrE (30 aa).

The chain crosses the membrane as a helical span at residues 4-24 (FQALMLMLAIGSFIIALLTYI).

The protein localises to the cell membrane. Functionally, toxic component of a type I toxin-antitoxin (TA) system; overexpression in the absence of cognate antisense antitoxin SR5 RNA leads to cell lysis. Base pairing occurs between the 3' UTRs of bsrE mRNA and SR5 RNA which leads to bsrE mRNA degradation initiated by RNase III (rnc) and RNase J1 (rnjA). Genetic evidence suggests an unidentified RNA-binding protein may exist that promotes TA RNA interaction. The chain is Small toxic protein BsrE from Bacillus subtilis (strain 168).